The following is a 587-amino-acid chain: Beta-(1--&gt;2)glucan export ATP-binding/permease protein NdvA (587 aa).

Residues 21-301 (VSLVVVANIV…MRQFATQIFE (281 aa)) enclose the ABC transmembrane type-1 domain. 6 consecutive transmembrane segments (helical) span residues 23 to 43 (LVVVANIVLATITIAEPILFG), 57 to 77 (PILFMWATFAVFNTIAFVLVA), 128 to 148 (GLWLEFMRNHLSTVIALALLI), 158 to 178 (LSAVLMVLAIAYWLIGRVVMS), 248 to 268 (MASTIAMMVVLIIGTMLVQAG), and 272 to 292 (VGDVIAFIGFANLLIGRLDLM). The ABC transporter domain maps to 335-569 (IEFRDVSFGF…NGRFAALLRA (235 aa)). ATP is bound at residue 368 to 375 (GPTGAGKT).

Belongs to the ABC transporter superfamily. Beta-(1--&gt;2)glucan exporter (TC 3.A.1.108.1) family. In terms of assembly, homodimer.

It is found in the cell inner membrane. It carries out the reaction [(1-&gt;2)-beta-D-glucosyl](n)(in) + ATP + H2O = [(1-&gt;2)-beta-D-glucosyl](n)(out) + ADP + phosphate + H(+). In terms of biological role, involved in beta-(1--&gt;2)glucan export. Transmembrane domains (TMD) form a pore in the inner membrane and the ATP-binding domain (NBD) is responsible for energy generation. The polypeptide is Beta-(1--&gt;2)glucan export ATP-binding/permease protein NdvA (Rhizobium johnstonii (strain DSM 114642 / LMG 32736 / 3841) (Rhizobium leguminosarum bv. viciae)).